The sequence spans 95 residues: Large ribosomal subunit protein uL23 (95 aa).

It belongs to the universal ribosomal protein uL23 family. As to quaternary structure, part of the 50S ribosomal subunit. Contacts protein L29, and trigger factor when it is bound to the ribosome.

Functionally, one of the early assembly proteins it binds 23S rRNA. One of the proteins that surrounds the polypeptide exit tunnel on the outside of the ribosome. Forms the main docking site for trigger factor binding to the ribosome. The sequence is that of Large ribosomal subunit protein uL23 from Coxiella burnetii (strain CbuK_Q154) (Coxiella burnetii (strain Q154)).